The primary structure comprises 242 residues: Ubiquitin-conjugating enzyme E2 6 (242 aa).

Residues 1-220 lie on the Cytoplasmic side of the membrane; sequence MASRQSQKRL…HSTPSFGVQR (220 aa). Residues 5-156 enclose the UBC core domain; the sequence is QSQKRLTKEY…NQRFTKQFPD (152 aa). The active-site Glycyl thioester intermediate is C87. The disordered stretch occupies residues 170-190; sequence AREQAAATTDSTDPEKPFDVR. The helical transmembrane segment at 221 to 240 threads the bilayer; the sequence is FTLVGVVVAAFIAAYFNFFS.

This sequence belongs to the ubiquitin-conjugating enzyme family.

It localises to the endoplasmic reticulum membrane. It carries out the reaction S-ubiquitinyl-[E1 ubiquitin-activating enzyme]-L-cysteine + [E2 ubiquitin-conjugating enzyme]-L-cysteine = [E1 ubiquitin-activating enzyme]-L-cysteine + S-ubiquitinyl-[E2 ubiquitin-conjugating enzyme]-L-cysteine.. The protein operates within protein modification; protein ubiquitination. Functionally, catalyzes the covalent attachment of ubiquitin to other proteins. Functions in degradation of misfolded or regulated proteins localized in the endoplasmic reticulum (ER) lumen or membrane via the ubiquitin-proteasome system. Cognate E2 conjugating enzyme for the DOA10 ubiquitin ligase complex, which is part of the ERAD-C pathway responsible for the rapid degradation of membrane proteins with misfolded cytoplasmic domains. In Debaryomyces hansenii (strain ATCC 36239 / CBS 767 / BCRC 21394 / JCM 1990 / NBRC 0083 / IGC 2968) (Yeast), this protein is Ubiquitin-conjugating enzyme E2 6 (UBC6).